The primary structure comprises 425 residues: TRAF family member-associated NF-kappa-B activator (425 aa).

Position 1 is an N-acetylmethionine (methionine 1). Residues 1–31 (MDKNIGEQLNKAYEAFRQACMDRDSAVKELQ) form a necessary for interaction with ZC3H12A region. The stretch at 22–62 (DRDSAVKELQQKTENYEQRIREQQEQLSLQQTIIDKLKSQL) forms a coiled coil. Positions 70-191 (DNNYGCVPLL…QCTDKTDKQE (122 aa)) are necessary for interaction with TRAF6. Phosphoserine occurs at positions 126 and 129. The interval 133–172 (HERGNIEKTFWDLKEEFHKICMLAKAQKDHLSKLNIPDTA) is interaction with TBK1 and IKBKE. The interval 172–191 (ATETQCSVPIQCTDKTDKQE) is TRAF family member interaction. Phosphoserine is present on residues serine 178 and serine 208. At threonine 213 the chain carries Phosphothreonine. Residues serine 225, serine 228, serine 341, serine 354, and serine 357 each carry the phosphoserine modification. The UBZ1-type zinc finger occupies 393-420 (PRVCEFCQAVFPPSITSRGDFLRHLNSH). 4 residues coordinate Zn(2+): cysteine 396, cysteine 399, histidine 416, and histidine 420.

Homodimer. Found in a deubiquitination complex with TANK, USP10 and ZC3H12A; this complex inhibits genotoxic stress- or interleukin-1-beta-mediated NF-kappaB activation by promoting IKBKG or TRAF6 deubiquitination. Interacts with IKBKG; this interaction increases in response to DNA damage. Interacts with TRAF6; this interaction increases in response to DNA damage and recruits USP10 to the ubiquitinated TRAF6. Interacts with USP10; this interaction increases in response to DNA damage. Interacts with ZC3H12A; this interaction increases in response to DNA damage. Interacts with TBK1. Interacts with IKBKE. Also interacts with TRAF1, TRAF2, and TRAF3 by binding to their TRAF-C domains; the interaction with TRAF2 is disrupted by the phosphorylation of TANK by IKBKE. Interacts more strongly with TRAF1 and TRAF2 than TRAF3. Interacts with IKBKG; the interaction is enhanced by IKBKE and TBK1. Part of a ternary complex consisting of TANK, IKBKB and IKBKG. As to quaternary structure, (Microbial infection) Interacts with vaccinia virus protein C6. In terms of assembly, (Microbial infection) Interacts with Seneca Valley virus protease 3C; this interaction allows the cleavage of TANK and subsequent suppression of host innate immunity. In terms of processing, phosphorylated by IKBKE. Post-translationally, (Microbial infection) Cleaved by encephalomyocarditis virus (EMCV) protease 3C. This cleavage allows the virus to disrupt the TANK-TBK1-IKKepsilon-IRF3 complex, thereby inhibiting the induction of the IFN-beta signal pathway. (Microbial infection) Cleaved by Seneca Valley virus protease 3C allowing the virus to suppress interferon type-I through both RIG-I and Toll-like receptor-dependent pathways. As to expression, ubiquitous.

Its subcellular location is the cytoplasm. Functionally, adapter protein involved in I-kappa-B-kinase (IKK) regulation which constitutively binds TBK1 and IKBKE playing a role in antiviral innate immunity. Acts as a regulator of TRAF function by maintaining them in a latent state. Blocks TRAF2 binding to LMP1 and inhibits LMP1-mediated NF-kappa-B activation. Negatively regulates NF-kappaB signaling and cell survival upon DNA damage. Plays a role as an adapter to assemble ZC3H12A, USP10 in a deubiquitination complex which plays a negative feedback response to attenuate NF-kappaB activation through the deubiquitination of IKBKG or TRAF6 in response to interleukin-1-beta (IL1B) stimulation or upon DNA damage. Promotes UBP10-induced deubiquitination of TRAF6 in response to DNA damage. May control negatively TRAF2-mediated NF-kappa-B activation signaled by CD40, TNFR1 and TNFR2. The chain is TRAF family member-associated NF-kappa-B activator (TANK) from Homo sapiens (Human).